Consider the following 206-residue polypeptide: Superoxide dismutase [Mn] (206 aa).

Mn(2+)-binding residues include His-27, His-82, Asp-168, and His-172.

The protein belongs to the iron/manganese superoxide dismutase family. Homodimer. The cofactor is Mn(2+).

The enzyme catalyses 2 superoxide + 2 H(+) = H2O2 + O2. In terms of biological role, destroys superoxide anion radicals which are normally produced within the cells and which are toxic to biological systems. The chain is Superoxide dismutase [Mn] (sodA) from Escherichia coli (strain K12).